A 485-amino-acid chain; its full sequence is MGIFRFISISLAAVSAANAGHILSMGHAKTIPNSYIVVMKDGTTEEDFTHHQSWVQSIHTHNVTRRGLLDNAGVRHKYGFGSMMGYAGLFDEDTIKDISDDPKVMFVEPDTTITIHGELTQNDVPSWGLARISSQRPGTEDYTYDSSAGEGITVYSVDTGVDIHHEDFEGRASWGTNMIEDGYDKDGNGHGTHTAGTMVGKTFGIAKKAKVVAVKVLDNNGSGPTSGIIAGINWCAQHASQNGGTDKAVINMSLGGGSSSALNRAAAQAVQKGMFLAVAAGNDNQDARTSSPASEDTVCTVGASAENDERSSFSNWGPAVDLFAPGSNIVSTRPGGGSQSMSGTSMASPHVAGLGAYIMALEGISGSAVCDRLKQLGTSSVTNPGPGTRTNILINNGDAKNGGKKPSQPSQPPKPSQPSKPQQPSEPQEPSEPQEPAPGQPAPAPAPVPQHPHTPFPNDDFNFDDFWKKYFGTDHWRKTFGRFWN.

An N-terminal signal peptide occupies residues 1-19 (MGIFRFISISLAAVSAANA). Residues 20–116 (GHILSMGHAK…VEPDTTITIH (97 aa)) constitute a propeptide that is removed on maturation. The Inhibitor I9 domain maps to 34–116 (SYIVVMKDGT…VEPDTTITIH (83 aa)). The region spanning 126-400 (SWGLARISSQ…NILINNGDAK (275 aa)) is the Peptidase S8 domain. Active-site charge relay system residues include Asp158 and His190. An N-linked (GlcNAc...) asparagine glycan is attached at Asn251. The active-site Charge relay system is Ser345. The span at 377-394 (GTSSVTNPGPGTRTNILI) shows a compositional bias: polar residues. Positions 377–462 (GTSSVTNPGP…HTPFPNDDFN (86 aa)) are disordered. The segment covering 409 to 418 (PSQPPKPSQP) has biased composition (pro residues). The segment covering 419 to 428 (SKPQQPSEPQ) has biased composition (low complexity). The span at 433 to 455 (PQEPAPGQPAPAPAPVPQHPHTP) shows a compositional bias: pro residues.

This sequence belongs to the peptidase S8 family.

Its subcellular location is the secreted. Functionally, secreted subtilisin-like serine protease with keratinolytic activity that contributes to pathogenicity. This chain is Subtilisin-like protease 1 (SUB1), found in Arthroderma otae (strain ATCC MYA-4605 / CBS 113480) (Microsporum canis).